Reading from the N-terminus, the 894-residue chain is Microsomal triglyceride transfer protein large subunit (894 aa).

An N-terminal signal peptide occupies residues 1-21 (MILLAVLFLCFFSSYSASVKG). Residues 28 to 658 (LNNERLYKLT…IFQYIGKAEL (631 aa)) enclose the Vitellogenin domain. Cys174 and Cys194 are disulfide-bonded.

As to quaternary structure, interacts with PRAP1. In terms of assembly, heterodimer; heterodimerizes with the protein disulfide isomerase (P4HB/PDI). Interacts with APOB. Heterodimer; heterodimerizes with the protein disulfide isomerase (P4HB/PDI). Post-translationally, cleaved by signal peptidase between residues Gln-33 and Asn-34. As to expression, mainly expressed in the intestine and the liver, and at lower levels in white and brown fat cells. Expressed in heart. Ubiquitous, and is the major isoform in hematopoietic cells and adipocytes.

It is found in the endoplasmic reticulum. It localises to the golgi apparatus. It catalyses the reaction a 1,2-diacyl-sn-glycero-3-phosphocholine(in) = a 1,2-diacyl-sn-glycero-3-phosphocholine(out). The catalysed reaction is a 1,2-diacyl-sn-glycero-3-phosphoethanolamine(in) = a 1,2-diacyl-sn-glycero-3-phosphoethanolamine(out). It carries out the reaction a cholesterol ester(in) = a cholesterol ester(out). The enzyme catalyses a triacyl-sn-glycerol(in) = a triacyl-sn-glycerol(out). In terms of biological role, catalyzes the transport of triglyceride, cholesteryl ester, and phospholipid between phospholipid surfaces. Required for the assembly and secretion of plasma lipoproteins that contain apolipoprotein B. May be involved in regulating cholesteryl ester biosynthesis in cells that produce lipoproteins. Critical for the development of natural killer T (NKT) cells. Required for the assembly and secretion of plasma lipoproteins that contain apolipoprotein B. This is Microsomal triglyceride transfer protein large subunit (Mttp) from Mus musculus (Mouse).